The sequence spans 435 residues: MSKFVVKPTNSLSGCLKVPGDKSISHRSIMLGSLANGVTKISGFLEGEDTLSTLKAFQDMGVKIEYNGDNVTIYGVGLNGLKKPLTPLDLGNSGTSIRLISGILAAQKFDSELCGDESLSKRPMGRVINPLTKMGAMIESNNGKLPLKIKGGQALNGIHYDLLVASAQVKSCVLLAGLYAKGETCIKELAPTRDHTERMLKGFGYKIDVNKNKICLIGGTQLNAFAIQVPSDISSAAFFMVAASIAPKADITLTGVNINPTRIGVIDILKLMGANLSLSNEREIGGELLADIRIQSEQLKGIRIPEELVSLAIDELPVIFIAASCAKGETILTDAKELRVKESDRIQVMADGLSILGIKNEVLEDGIKIQGGVFSKPGIVIESHHDHRISMSFAIASLRCQYIIEIEDVDNVKTSFPNFVELANQIGMNINLVNS.

Positions 22, 23, and 27 each coordinate 3-phosphoshikimate. Lys-22 is a phosphoenolpyruvate binding site. Phosphoenolpyruvate is bound by residues Gly-94 and Arg-122. 3-phosphoshikimate-binding residues include Ser-166, Gln-168, Asp-314, and Lys-341. Gln-168 lines the phosphoenolpyruvate pocket. The active-site Proton acceptor is Asp-314. 2 residues coordinate phosphoenolpyruvate: Arg-345 and Arg-388.

Belongs to the EPSP synthase family. As to quaternary structure, monomer.

Its subcellular location is the cytoplasm. It catalyses the reaction 3-phosphoshikimate + phosphoenolpyruvate = 5-O-(1-carboxyvinyl)-3-phosphoshikimate + phosphate. It participates in metabolic intermediate biosynthesis; chorismate biosynthesis; chorismate from D-erythrose 4-phosphate and phosphoenolpyruvate: step 6/7. Functionally, catalyzes the transfer of the enolpyruvyl moiety of phosphoenolpyruvate (PEP) to the 5-hydroxyl of shikimate-3-phosphate (S3P) to produce enolpyruvyl shikimate-3-phosphate and inorganic phosphate. This is 3-phosphoshikimate 1-carboxyvinyltransferase from Ruthia magnifica subsp. Calyptogena magnifica.